A 224-amino-acid chain; its full sequence is Claudin-17 (224 aa).

Over 1 to 7 (MAFYPLQ) the chain is Cytoplasmic. The chain crosses the membrane as a helical span at residues 8–28 (IAGLVLGFFGLVGTIGTTLLP). Over 29–81 (QWRVSAFIGSNIIIFERIWEGLWMNCIQQAMVTLQCKFYNSILALPPVLEAAR) the chain is Extracellular. A helical transmembrane segment spans residues 82 to 102 (ALMCVAVALALVALIIGICGM). At 103 to 124 (KQLQCTGSSERVKAYLLGTSGV) the chain is on the cytoplasmic side. A helical transmembrane segment spans residues 125–145 (LFILTGIFVLIPVSWTANIII). Residues 146–164 (RDFYDPTVHAGQKRELGGA) lie on the Extracellular side of the membrane. The helical transmembrane segment at 165-185 (LFLGWATAAVLFIGGGLLCGY) threads the bilayer. Residues 186–224 (CCCNRKERWHRYPVPAYRVPQKDNQRNVTVPRKSSTSYV) are Cytoplasmic-facing.

This sequence belongs to the claudin family. Does not form homotypic polymeric strands and it is not sufficient to form tight junctions by its own. Interacts with OCLN. Expressed at high levels in the kidney and at mucher lower levels in the brain. In the kidney, expression gradually decreases from the proximal tubule downstream to the distal convoluted tubule. Expressed in the thin ascending limb of Henle's loop, as well as in the thick ascending limb of Henle's loop. In the distal convoluted tubules, expressed only in a few tubules. Not detected in the collecting duct. In the brain, expressed in blood vessels (at protein level).

It localises to the cell junction. The protein resides in the tight junction. Its subcellular location is the cell membrane. The catalysed reaction is chloride(in) = chloride(out). It carries out the reaction hydrogencarbonate(in) = hydrogencarbonate(out). The enzyme catalyses bromide(in) = bromide(out). It catalyses the reaction iodide(out) = iodide(in). The catalysed reaction is fluoride(in) = fluoride(out). It carries out the reaction nitrate(in) = nitrate(out). The enzyme catalyses thiocyanate(in) = thiocyanate(out). Channel-forming tight junction protein with selectivity for anions, including chloride and hydrogencarbonate, and for solutes smaller than 9 Angstrom in diameter. In the kidney proximal tubule, may be involved in quantitative reabsorption of filtered anions. Does not affect water permeability. The polypeptide is Claudin-17 (Cldn17) (Mus musculus (Mouse)).